A 264-amino-acid polypeptide reads, in one-letter code: MSGSTITPWVVGNWKMNPMRANANQLIEEFKQLLQQNQIADENCHVGVAPVSIALTTVQAQLQDAARTVYTVAQDVSRVAGTGAYTGEVSAELLKDSQINFVLVGHSERRDIFGDNVEILKAKLQNALNAGMTVIYCVGESLEQREQGQAEQVVLQQICDIAPVVTAEQWQNQVVIAYEPIWAIGTGKTASPQDAQAMHAKIREGLCQLTPAGSNIAILYGGSVKAENAVELAACPDINGALVGGASLNAASFYQIVQAFAQSK.

Residue 13–15 (NWK) coordinates substrate. The active-site Electrophile is the His-106. Residue Glu-179 is the Proton acceptor of the active site. Residues Gly-185, Ser-223, and 244–245 (GG) contribute to the substrate site.

The protein belongs to the triosephosphate isomerase family. As to quaternary structure, homodimer.

Its subcellular location is the cytoplasm. The enzyme catalyses D-glyceraldehyde 3-phosphate = dihydroxyacetone phosphate. It functions in the pathway carbohydrate biosynthesis; gluconeogenesis. Its pathway is carbohydrate degradation; glycolysis; D-glyceraldehyde 3-phosphate from glycerone phosphate: step 1/1. Functionally, involved in the gluconeogenesis. Catalyzes stereospecifically the conversion of dihydroxyacetone phosphate (DHAP) to D-glyceraldehyde-3-phosphate (G3P). The protein is Triosephosphate isomerase of Acinetobacter baumannii (strain SDF).